Here is a 136-residue protein sequence, read N- to C-terminus: uncharacterized protein (136 aa).

2 helical membrane passes run 36–56 and 63–83; these read FLLTNLVFLFVAFLILIIYLI and FAFAFIATIVFIIFYNILFLS.

The protein resides in the cell membrane. This is an uncharacterized protein from Mycoplasma pneumoniae (strain ATCC 29342 / M129 / Subtype 1) (Mycoplasmoides pneumoniae).